The primary structure comprises 279 residues: MKNLIILTGLSGAGKSTALGLLEDMGFYCIDNLPINLVETILPVISMNVDNIAFVLDARSENFERIDEILNNLKKKYASNLKVIFLTAKDAIIINRFAHTRRNHPLLKRVNSLEKAIQLEREILTKALEFSDIVIDTSNLNPHQLREKLVEILGSVKKKFLVRILSFGFKYGLPLDVDFIFDVRFFPNPFYIKDLREKSGRDEKVKEFLYNTQGVKEYIEMIKNVVDFALKRYENEGRMELSIGIGCTGGQHRSVFFAEELASIYRQRYEVLLEHRDVK.

9–16 serves as a coordination point for ATP; the sequence is GLSGAGKS. Residue 57-60 participates in GTP binding; sequence DARS.

This sequence belongs to the RapZ-like family.

Functionally, displays ATPase and GTPase activities. This chain is Nucleotide-binding protein THA_1518, found in Thermosipho africanus (strain TCF52B).